We begin with the raw amino-acid sequence, 270 residues long: Chlorophyll a-b binding protein 7, chloroplastic (270 aa).

A chloroplast-targeting transit peptide spans 1 to 42; that stretch reads MASACASSTIAAVAFSSPSSRRNGSIVGTTKASFLGGRRLRV. Trp68 is a binding site for chlorophyll b. Phe88, Glu107, and His110 together coordinate chlorophyll a. Arg112 lines the chlorophyll b pocket. The helical transmembrane segment at 113–133 threads the bilayer; sequence WAMLGAAGIFIPELLTKIGIL. Residue Gln144 participates in chlorophyll a binding. Residues 146 to 166 traverse the membrane as a helical segment; the sequence is YFTDTTTLFIVELVLIGWAEG. Ile155, Glu165, and Arg168 together coordinate chlorophyll b. The chlorophyll a site is built by Lys221, Glu222, Asn225, Arg227, Gln239, and His254. A helical membrane pass occupies residues 228-248; that stretch reads LAMLAVMGAWFQHIYTGTGPI.

Belongs to the light-harvesting chlorophyll a/b-binding (LHC) protein family. The LHC complex consists of chlorophyll a-b binding proteins. Requires Binds at least 14 chlorophylls (8 Chl-a and 6 Chl-b) and carotenoids such as lutein and neoxanthin. as cofactor. Post-translationally, photoregulated by reversible phosphorylation of its threonine residues.

The protein resides in the plastid. Its subcellular location is the chloroplast thylakoid membrane. The light-harvesting complex (LHC) functions as a light receptor, it captures and delivers excitation energy to photosystems with which it is closely associated. The polypeptide is Chlorophyll a-b binding protein 7, chloroplastic (CAB7) (Solanum lycopersicum (Tomato)).